The chain runs to 294 residues: Deubiquitinase OTUD6B (294 aa).

Met-1 carries the N-acetylmethionine modification. The OTU domain maps to 148 to 285 (LEIKQIPSDG…GEHYNSVTRL (138 aa)). A cys-loop region spans residues 153 to 159 (IPSDGHC). Residue Asp-156 is part of the active site. Catalysis depends on Cys-159, which acts as the Nucleophile. Residues 220-230 (IVNTAAWGGQL) are variable-loop. Positions 268-278 (YMRHAYGLGEH) are his-loop. His-278 is a catalytic residue.

Interacts with the eukaryotic translation initiation factor 4F complex. As to expression, ubiquitously expressed. Expression is observed in several organ systems including the cardiovascular, digestive, central and peripheral nervous and musculoskeletal systems.

It catalyses the reaction Thiol-dependent hydrolysis of ester, thioester, amide, peptide and isopeptide bonds formed by the C-terminal Gly of ubiquitin (a 76-residue protein attached to proteins as an intracellular targeting signal).. Functionally, deubiquitinating enzyme that may play a role in the ubiquitin-dependent regulation of protein synthesis, downstream of mTORC1. May associate with the protein synthesis initiation complex and modify its ubiquitination to repress translation. May also repress DNA synthesis and modify different cellular targets thereby regulating cell growth and proliferation. May also play a role in proteasome assembly and function. The sequence is that of Deubiquitinase OTUD6B from Mus musculus (Mouse).